The primary structure comprises 205 residues: Small ribosomal subunit protein uS4 (205 aa).

Residues 1 to 12 are compositionally biased toward basic residues; sequence MSKRIQAKHKLD. A disordered region spans residues 1–49; that stretch reads MSKRIQAKHKLDRRMGQNIWGRPKSPVNRREYGPGQHGQRRKGKLSDFG. The S4 RNA-binding domain occupies 94-156; sequence RRLDAVIYRA…SKQLEIVVVA (63 aa).

Belongs to the universal ribosomal protein uS4 family. Part of the 30S ribosomal subunit. Contacts protein S5. The interaction surface between S4 and S5 is involved in control of translational fidelity.

Functionally, one of the primary rRNA binding proteins, it binds directly to 16S rRNA where it nucleates assembly of the body of the 30S subunit. In terms of biological role, with S5 and S12 plays an important role in translational accuracy. The polypeptide is Small ribosomal subunit protein uS4 (Methylobacterium nodulans (strain LMG 21967 / CNCM I-2342 / ORS 2060)).